The primary structure comprises 669 residues: DNA mismatch repair protein MutL (669 aa).

The tract at residues 343 to 408 (SAFHRAEPEE…RAPSDSSVRE (66 aa)) is disordered. The span at 344-356 (AFHRAEPEERESQ) shows a compositional bias: basic and acidic residues. A compositionally biased stretch (polar residues) spans 357–372 (PETTPQYSPQSVSTTV). The span at 390–408 (TDYEIKPRDRAPSDSSVRE) shows a compositional bias: basic and acidic residues.

Belongs to the DNA mismatch repair MutL/HexB family.

Functionally, this protein is involved in the repair of mismatches in DNA. It is required for dam-dependent methyl-directed DNA mismatch repair. May act as a 'molecular matchmaker', a protein that promotes the formation of a stable complex between two or more DNA-binding proteins in an ATP-dependent manner without itself being part of a final effector complex. The polypeptide is DNA mismatch repair protein MutL (Vibrio parahaemolyticus serotype O3:K6 (strain RIMD 2210633)).